Here is a 323-residue protein sequence, read N- to C-terminus: MVTILDTINPDAKRVRHPEKAHRPDTEVMRKPDWIRVKAPTSKGYAETRAIVKEHKLVTVCEEAGCPNIGECWDKKHATFMIMGEICTRACAFCNVATGKPNALDMDEPENVAKAVREMGLSHVVITSVDRDDLEDGGAEHFEKVIWAIRSASPATTIEILTPDFLKKPGALERVVAAKPDVFNHNMETVAGNYLTVRPGARYFHSIRLLQRVKELDPTMFTKSGIMVGLGEERNEVLQLMDDLRTADVDFLTIGQYLQPTRKHHKVESFVTPEEFKSYETVAYSKGFLMVASSPLTRSSHHAGDDFARLRAAREKKLLMAAE.

C61, C66, C72, C87, C91, C94, and S300 together coordinate [4Fe-4S] cluster. Residues 73 to 289 (WDKKHATFMI…ETVAYSKGFL (217 aa)) form the Radical SAM core domain.

The protein belongs to the radical SAM superfamily. Lipoyl synthase family. It depends on [4Fe-4S] cluster as a cofactor.

Its subcellular location is the cytoplasm. The catalysed reaction is [[Fe-S] cluster scaffold protein carrying a second [4Fe-4S](2+) cluster] + N(6)-octanoyl-L-lysyl-[protein] + 2 oxidized [2Fe-2S]-[ferredoxin] + 2 S-adenosyl-L-methionine + 4 H(+) = [[Fe-S] cluster scaffold protein] + N(6)-[(R)-dihydrolipoyl]-L-lysyl-[protein] + 4 Fe(3+) + 2 hydrogen sulfide + 2 5'-deoxyadenosine + 2 L-methionine + 2 reduced [2Fe-2S]-[ferredoxin]. The protein operates within protein modification; protein lipoylation via endogenous pathway; protein N(6)-(lipoyl)lysine from octanoyl-[acyl-carrier-protein]: step 2/2. Catalyzes the radical-mediated insertion of two sulfur atoms into the C-6 and C-8 positions of the octanoyl moiety bound to the lipoyl domains of lipoate-dependent enzymes, thereby converting the octanoylated domains into lipoylated derivatives. This is Lipoyl synthase from Rhizobium etli (strain ATCC 51251 / DSM 11541 / JCM 21823 / NBRC 15573 / CFN 42).